A 260-amino-acid polypeptide reads, in one-letter code: Pyridoxine 5'-phosphate synthase (260 aa).

3-amino-2-oxopropyl phosphate is bound at residue N15. 17–18 (DH) provides a ligand contact to 1-deoxy-D-xylulose 5-phosphate. A 3-amino-2-oxopropyl phosphate-binding site is contributed by R26. H51 (proton acceptor) is an active-site residue. 2 residues coordinate 1-deoxy-D-xylulose 5-phosphate: R53 and H58. E78 acts as the Proton acceptor in catalysis. Position 108 (T108) interacts with 1-deoxy-D-xylulose 5-phosphate. H199 functions as the Proton donor in the catalytic mechanism. 3-amino-2-oxopropyl phosphate is bound by residues G200 and 221 to 222 (GH).

This sequence belongs to the PNP synthase family. As to quaternary structure, homooctamer; tetramer of dimers.

Its subcellular location is the cytoplasm. The enzyme catalyses 3-amino-2-oxopropyl phosphate + 1-deoxy-D-xylulose 5-phosphate = pyridoxine 5'-phosphate + phosphate + 2 H2O + H(+). It participates in cofactor biosynthesis; pyridoxine 5'-phosphate biosynthesis; pyridoxine 5'-phosphate from D-erythrose 4-phosphate: step 5/5. Catalyzes the complicated ring closure reaction between the two acyclic compounds 1-deoxy-D-xylulose-5-phosphate (DXP) and 3-amino-2-oxopropyl phosphate (1-amino-acetone-3-phosphate or AAP) to form pyridoxine 5'-phosphate (PNP) and inorganic phosphate. This Cupriavidus taiwanensis (strain DSM 17343 / BCRC 17206 / CCUG 44338 / CIP 107171 / LMG 19424 / R1) (Ralstonia taiwanensis (strain LMG 19424)) protein is Pyridoxine 5'-phosphate synthase.